The following is a 445-amino-acid chain: Amino-acid acetyltransferase (445 aa).

Positions 299 to 438 (EQVRQAQIDD…QGLYNYQRNS (140 aa)) constitute an N-acetyltransferase domain.

Belongs to the acetyltransferase family. ArgA subfamily.

It is found in the cytoplasm. The enzyme catalyses L-glutamate + acetyl-CoA = N-acetyl-L-glutamate + CoA + H(+). Its pathway is amino-acid biosynthesis; L-arginine biosynthesis; N(2)-acetyl-L-ornithine from L-glutamate: step 1/4. The protein is Amino-acid acetyltransferase of Vibrio atlanticus (strain LGP32) (Vibrio splendidus (strain Mel32)).